Reading from the N-terminus, the 428-residue chain is D-amino acid dehydrogenase (428 aa).

3–17 (VVILGSGVVGVASAY) serves as a coordination point for FAD.

The protein belongs to the DadA oxidoreductase family. It depends on FAD as a cofactor.

It catalyses the reaction a D-alpha-amino acid + A + H2O = a 2-oxocarboxylate + AH2 + NH4(+). It functions in the pathway amino-acid degradation; D-alanine degradation; NH(3) and pyruvate from D-alanine: step 1/1. Oxidative deamination of D-amino acids. This chain is D-amino acid dehydrogenase, found in Burkholderia cenocepacia (strain HI2424).